The following is a 342-amino-acid chain: UDP-N-acetylglucosamine--N-acetylmuramyl-(pentapeptide) pyrophosphoryl-undecaprenol N-acetylglucosamine transferase (342 aa).

Residues 10–12 (TGG), Asn-124, Ser-177, and Gln-275 each bind UDP-N-acetyl-alpha-D-glucosamine.

The protein belongs to the glycosyltransferase 28 family. MurG subfamily.

Its subcellular location is the cell inner membrane. The enzyme catalyses di-trans,octa-cis-undecaprenyl diphospho-N-acetyl-alpha-D-muramoyl-L-alanyl-D-glutamyl-meso-2,6-diaminopimeloyl-D-alanyl-D-alanine + UDP-N-acetyl-alpha-D-glucosamine = di-trans,octa-cis-undecaprenyl diphospho-[N-acetyl-alpha-D-glucosaminyl-(1-&gt;4)]-N-acetyl-alpha-D-muramoyl-L-alanyl-D-glutamyl-meso-2,6-diaminopimeloyl-D-alanyl-D-alanine + UDP + H(+). The protein operates within cell wall biogenesis; peptidoglycan biosynthesis. In terms of biological role, cell wall formation. Catalyzes the transfer of a GlcNAc subunit on undecaprenyl-pyrophosphoryl-MurNAc-pentapeptide (lipid intermediate I) to form undecaprenyl-pyrophosphoryl-MurNAc-(pentapeptide)GlcNAc (lipid intermediate II). The chain is UDP-N-acetylglucosamine--N-acetylmuramyl-(pentapeptide) pyrophosphoryl-undecaprenol N-acetylglucosamine transferase from Campylobacter jejuni (strain RM1221).